We begin with the raw amino-acid sequence, 317 residues long: AT-hook motif nuclear-localized protein 22 (317 aa).

Disordered regions lie at residues H22 to D41 and L48 to I106. Residues Q26 to N35 are compositionally biased toward low complexity. The segment covering L48 to A64 has biased composition (basic and acidic residues). Residues G72–D84 are compositionally biased toward gly residues. The segment at residues R89 to K101 is a DNA-binding region (a.T hook). A PPC domain is found at A113–G253. Residues N258–Q285 are disordered. The segment covering Q270–Q282 has biased composition (low complexity).

In terms of assembly, homodimer. Interacts with HDA1/HDA19, HDA6 and HDA9. In terms of tissue distribution, expressed at the hypocotyl-root transition zone and the root hair zone. Also detected in the inflorescence.

It is found in the nucleus. In terms of biological role, transcription factor that specifically binds AT-rich DNA sequences related to the nuclear matrix attachment regions (MARs). Binds an AT-rich DNA sequences in the FLOWERING LOCUS T (FT) promoter. Acts redundantly with AHL18, AHL27 and AHL29 in the regulation of flowering and regulation of the hypocotyl elongation. Plays a role in both photo- and skotomorphogenesis. Acts as a chromatin remodeling factor that modifies the architecture of FLOWERING LOCUS T (FT) chromatin by modulating both H3 acetylation and methylation leading to the regulation of FT expression during flowering induction. This Arabidopsis thaliana (Mouse-ear cress) protein is AT-hook motif nuclear-localized protein 22.